A 240-amino-acid chain; its full sequence is Pro-opiomelanocortin B (240 aa).

An N-terminal signal peptide occupies residues 1 to 36 (MFGTFLQNQSVRLNMVCAPWLLAVVVVCVCNPGVEG). Gln37 carries the post-translational modification Pyrrolidone carboxylic acid. His111 is a propeptide. At Ser112 the chain carries N-acetylserine; in Corticotropin. Ile124 is subject to Isoleucine amide.

Belongs to the POMC family. In terms of processing, specific enzymatic cleavages at paired basic residues yield the different active peptides. Post-translationally, acetylation of beta-endorphin occurs in a tissue-specific manner. In terms of tissue distribution, pituitary and hypothalamus of adult diploid animals.

Its subcellular location is the secreted. Its function is as follows. Stimulates the adrenal glands to release cortisol. Melanocyte-stimulating hormone alpha: Anorexigenic peptide. Increases the pigmentation of skin by increasing melanin production in melanocytes. In terms of biological role, melanocyte-stimulating hormone beta: Increases the pigmentation of skin by increasing melanin production in melanocytes. Functionally, beta-endorphin: Endogenous orexigenic opiate. Its function is as follows. Endogenous opiate. This is Pro-opiomelanocortin B (pomcb) from Oncorhynchus mykiss (Rainbow trout).